The primary structure comprises 246 residues: Submandibular gland secretory Glx-rich protein CA (246 aa).

The first 18 residues, 1 to 18 (MLVVLLTAALLALSSAQG), serve as a signal peptide directing secretion. The disordered stretch occupies residues 14–223 (SSAQGTDEEV…SGRPKKPLLP (210 aa)). Low complexity-rich tracts occupy residues 39 to 50 (PVDSGSDPPSAD), 58 to 71 (EGES…EPPA), 81 to 93 (QQEP…QEPP), 104 to 116 (QQEP…QEPP), 127 to 141 (QQEP…PPAT), 150 to 159 (QQESTQAENQ), and 178 to 196 (VESP…QQTN). Repeat copies occupy residues 67 to 89 (EEPP…QAEN), 90 to 112 (QEPP…QAEN), 113 to 135 (QEPP…QAED), 136 to 158 (QQPP…QAEN), and 159 to 181 (QEPS…VESP). Residues 67–181 (EEPPATSGSE…QPEEGNVESP (115 aa)) are 5 X 23 AA tandem repeats. Residues 197–216 (PEEKPPAPKTQEEPQHDSGR) show a composition bias toward basic and acidic residues.

As to expression, submandibular gland acinar cells.

The protein localises to the secreted. GRP proteins have a marked affinity for hydroxyapatite. They may play a role in the formation of the protective acquired pellicle at the saliva-tooth interface. The protein is Submandibular gland secretory Glx-rich protein CA (Grpca) of Rattus norvegicus (Rat).